We begin with the raw amino-acid sequence, 20 residues long: Peptide encoded by miPEP171b (20 aa).

As to expression, lateral root initiations.

Its function is as follows. Regulatory peptide encoded by the primary transcript (pri-miR171b) of the microRNA miR171b that enhances the accumulation of its corresponding mature miRNA. Acts probably as a transcriptional activator of its corresponding pri-miRNA. Has no effect on the accumulation of other miRNAs. Addition of synthetic miPEP171b increases the abundance of miR171b, with consequent reduction of lateral root formation. The protein is Peptide encoded by miPEP171b of Medicago truncatula (Barrel medic).